The sequence spans 109 residues: Large ribosomal subunit protein eL30 (109 aa).

The protein belongs to the eukaryotic ribosomal protein eL30 family. Component of the large ribosomal subunit (LSU). Mature N.crassa ribosomes consist of a small (40S) and a large (60S) subunit. The 40S small subunit contains 1 molecule of ribosomal RNA (18S rRNA) and at least 32 different proteins. The large 60S subunit contains 3 rRNA molecules (26S, 5.8S and 5S rRNA) and at least 42 different proteins.

Its subcellular location is the cytoplasm. Functionally, component of the ribosome, a large ribonucleoprotein complex responsible for the synthesis of proteins in the cell. The small ribosomal subunit (SSU) binds messenger RNAs (mRNAs) and translates the encoded message by selecting cognate aminoacyl-transfer RNA (tRNA) molecules. The large subunit (LSU) contains the ribosomal catalytic site termed the peptidyl transferase center (PTC), which catalyzes the formation of peptide bonds, thereby polymerizing the amino acids delivered by tRNAs into a polypeptide chain. The nascent polypeptides leave the ribosome through a tunnel in the LSU and interact with protein factors that function in enzymatic processing, targeting, and the membrane insertion of nascent chains at the exit of the ribosomal tunnel. This Neurospora crassa (strain ATCC 24698 / 74-OR23-1A / CBS 708.71 / DSM 1257 / FGSC 987) protein is Large ribosomal subunit protein eL30 (rpl-30).